A 565-amino-acid polypeptide reads, in one-letter code: Mitochondrial distribution and morphology protein 34 (565 aa).

One can recognise an SMP-LTD domain in the interval 1–195 (MAFNFNWSPL…LPAIIHRLSL (195 aa)). 3 disordered regions span residues 207–236 (EDQD…VDAL), 296–317 (PSDQ…LSRT), and 348–504 (STYG…RQLP). Residues 358 to 370 (RHSKAHARKRKKR) show a composition bias toward basic residues. The segment covering 371–381 (VVDLRRPKQPE) has biased composition (basic and acidic residues). A compositionally biased stretch (polar residues) spans 382-401 (SETASVTDESSFTETTSAPS). 2 stretches are compositionally biased toward basic and acidic residues: residues 446 to 472 (LRRD…HAEV) and 483 to 496 (IRHE…EKQE).

It belongs to the MDM34 family. As to quaternary structure, component of the ER-mitochondria encounter structure (ERMES) or MDM complex, composed of mmm1, mdm10, mdm12 and mdm34.

The protein localises to the mitochondrion outer membrane. Component of the ERMES/MDM complex, which serves as a molecular tether to connect the endoplasmic reticulum (ER) and mitochondria. Components of this complex are involved in the control of mitochondrial shape and protein biogenesis, and function in nonvesicular lipid trafficking between the ER and mitochondria. Mdm34 is required for the interaction of the ER-resident membrane protein mmm1 and the outer mitochondrial membrane-resident beta-barrel protein mdm10. This chain is Mitochondrial distribution and morphology protein 34, found in Aspergillus terreus (strain NIH 2624 / FGSC A1156).